The sequence spans 251 residues: Hydroxyacylglutathione hydrolase (251 aa).

Residues histidine 53, histidine 55, aspartate 57, histidine 58, histidine 110, aspartate 127, and histidine 165 each coordinate Zn(2+).

Belongs to the metallo-beta-lactamase superfamily. Glyoxalase II family. In terms of assembly, monomer. The cofactor is Zn(2+).

It carries out the reaction an S-(2-hydroxyacyl)glutathione + H2O = a 2-hydroxy carboxylate + glutathione + H(+). Its pathway is secondary metabolite metabolism; methylglyoxal degradation; (R)-lactate from methylglyoxal: step 2/2. Its function is as follows. Thiolesterase that catalyzes the hydrolysis of S-D-lactoyl-glutathione to form glutathione and D-lactic acid. The polypeptide is Hydroxyacylglutathione hydrolase (Salmonella gallinarum (strain 287/91 / NCTC 13346)).